A 611-amino-acid polypeptide reads, in one-letter code: Chaperone protein DnaK (611 aa).

Position 173 is a phosphothreonine; by autocatalysis (Thr173). Disordered regions lie at residues 525–548 (DNIS…ALEG) and 573–611 (YQQA…EDKK). Residues 529-542 (EEDKSNAESKKDAL) are compositionally biased toward basic and acidic residues. Residues 574 to 591 (QQAQQAQQQAQDGAQQTQ) are compositionally biased toward low complexity. Over residues 599–611 (AEFKEVNDDEDKK) the composition is skewed to basic and acidic residues.

Belongs to the heat shock protein 70 family.

In terms of biological role, acts as a chaperone. The polypeptide is Chaperone protein DnaK (Staphylococcus haemolyticus (strain JCSC1435)).